We begin with the raw amino-acid sequence, 179 residues long: ATP synthase subunit delta (179 aa).

It belongs to the ATPase delta chain family. As to quaternary structure, F-type ATPases have 2 components, F(1) - the catalytic core - and F(0) - the membrane proton channel. F(1) has five subunits: alpha(3), beta(3), gamma(1), delta(1), epsilon(1). F(0) has three main subunits: a(1), b(2) and c(10-14). The alpha and beta chains form an alternating ring which encloses part of the gamma chain. F(1) is attached to F(0) by a central stalk formed by the gamma and epsilon chains, while a peripheral stalk is formed by the delta and b chains.

It localises to the cell membrane. Functionally, f(1)F(0) ATP synthase produces ATP from ADP in the presence of a proton or sodium gradient. F-type ATPases consist of two structural domains, F(1) containing the extramembraneous catalytic core and F(0) containing the membrane proton channel, linked together by a central stalk and a peripheral stalk. During catalysis, ATP synthesis in the catalytic domain of F(1) is coupled via a rotary mechanism of the central stalk subunits to proton translocation. In terms of biological role, this protein is part of the stalk that links CF(0) to CF(1). It either transmits conformational changes from CF(0) to CF(1) or is implicated in proton conduction. The protein is ATP synthase subunit delta of Clostridium beijerinckii (strain ATCC 51743 / NCIMB 8052) (Clostridium acetobutylicum).